The chain runs to 188 residues: UPF0301 protein XC_1365 (188 aa).

Belongs to the UPF0301 (AlgH) family.

The sequence is that of UPF0301 protein XC_1365 from Xanthomonas campestris pv. campestris (strain 8004).